The chain runs to 350 residues: Transmembrane protein 185A (350 aa).

7 helical membrane-spanning segments follow: residues 16–36 (LIYACLLLFSVLLALRLDGII), 41–61 (WAVFAPIWLWKLMVIVGASVG), 81–101 (FKAMLIAVGIHLLLLMFEVLV), 111–131 (FWLLVFMPLFFVSPVSVAACV), 177–197 (ILMSFLCLVVLYYIVWSVLFL), 211–231 (ITMALSWMTIVVPLLTFEILL), and 240–260 (AFSCIPIFVPLWLSLITLMAT). The tract at residues 298-350 (DLHHEDSEETEETPVPEPPKIAPMFRKKARVVITQSPGKYVLPPPKLNIEMPD) is mediates interaction with MAP1B.

The protein belongs to the TMEM185 family. In terms of assembly, interacts with MAP1B. In terms of tissue distribution, broadly expressed in brain where it is specifically expressed by neurons (at protein level). Also detected in some cells of arterioles, intestine, lung and testis (at protein level).

It localises to the cell projection. The protein resides in the dendrite. Its subcellular location is the membrane. The polypeptide is Transmembrane protein 185A (Tmem185a) (Mus musculus (Mouse)).